We begin with the raw amino-acid sequence, 364 residues long: MALTLEELVKRFGGEIAGDAQCKVGGLAPLDQAGPQQLAFLANPKYLSQVESTRAGAVLIAPKDLEKLGAAAQGRTAGPRNFIVTPNPYAYFARVAQMFIDLATPPRAAGVHPSATIDPAAKVAATAVIGPHVTIEAGAVIEDGVQLDANVFVGRGTTIGAGSHFYPNASVYHGCKVGPRAIVHAGAVIGSDGFGFAPDFVGDGDARTGSWVKIPQVGGVTIGPDVEIGANTTIDRGAMADTVIEECVKIDNQVQIGHNCRIGAYTVIAGSAGIAGSTTIGRHCMIGGAAGIAGHVTLGDYVIITAKSGVSKSLPKAGIYTSAFPAVDHGEWNKSAALVRNLDKLRERIKALEAALAAQGGTDA.

Catalysis depends on His258, which acts as the Proton acceptor.

It belongs to the transferase hexapeptide repeat family. LpxD subfamily. In terms of assembly, homotrimer.

The catalysed reaction is a UDP-3-O-[(3R)-3-hydroxyacyl]-alpha-D-glucosamine + a (3R)-hydroxyacyl-[ACP] = a UDP-2-N,3-O-bis[(3R)-3-hydroxyacyl]-alpha-D-glucosamine + holo-[ACP] + H(+). The protein operates within bacterial outer membrane biogenesis; LPS lipid A biosynthesis. Catalyzes the N-acylation of UDP-3-O-acylglucosamine using 3-hydroxyacyl-ACP as the acyl donor. Is involved in the biosynthesis of lipid A, a phosphorylated glycolipid that anchors the lipopolysaccharide to the outer membrane of the cell. In Burkholderia orbicola (strain AU 1054), this protein is UDP-3-O-acylglucosamine N-acyltransferase.